The chain runs to 580 residues: Acyl-coenzyme A synthetase ACSM4, mitochondrial (580 aa).

The N-terminal 22 residues, 1 to 22, are a transit peptide targeting the mitochondrion; that stretch reads MKVLLHCQRLRFIWLAKPAGRH. Residues 229–237, 368–373, Asp-455, Arg-470, and Lys-566 contribute to the ATP site; these read TSGTTGSPK and EGYGQT.

This sequence belongs to the ATP-dependent AMP-binding enzyme family. The cofactor is Mg(2+). Mn(2+) is required as a cofactor.

It is found in the mitochondrion. It catalyses the reaction a medium-chain fatty acid + ATP + CoA = a medium-chain fatty acyl-CoA + AMP + diphosphate. The catalysed reaction is hexanoate + ATP + CoA = hexanoyl-CoA + AMP + diphosphate. It carries out the reaction octanoate + ATP + CoA = octanoyl-CoA + AMP + diphosphate. The enzyme catalyses decanoate + ATP + CoA = decanoyl-CoA + AMP + diphosphate. It catalyses the reaction dodecanoate + ATP + CoA = dodecanoyl-CoA + AMP + diphosphate. Its function is as follows. Catalyzes the activation of fatty acids by CoA to produce an acyl-CoA, the first step in fatty acid metabolism. Capable of activating medium-chain fatty acids with a preference for C6-12 fatty acids. The chain is Acyl-coenzyme A synthetase ACSM4, mitochondrial (Acsm4) from Mus musculus (Mouse).